The primary structure comprises 588 residues: Probable basic-leucine zipper transcription factor M (588 aa).

Residues 127 to 157 adopt a coiled-coil conformation; that stretch reads QVEQQQEQEQEQEQQQKQQQQQYIEKQIQEI. Over residues 221 to 240 the composition is skewed to low complexity; that stretch reads QQNHIDNQSLNNSNTKTSKN. Residues 221-250 form a disordered region; that stretch reads QQNHIDNQSLNNSNTKTSKNQQKDNNLPKK. The bZIP domain occupies 263–326; sequence NNNNIEKKRD…GSNLMRPEPE (64 aa). The interval 269–289 is basic motif; the sequence is KKRDQTESSKNFREKKKEYVK. The segment at 291 to 312 is leucine-zipper; it reads IESKILALTLENDKLKKENDSL.

The protein belongs to the bZIP family.

It localises to the nucleus. Probable transcriptional regulator. This chain is Probable basic-leucine zipper transcription factor M (bzpM), found in Dictyostelium discoideum (Social amoeba).